The following is an 811-amino-acid chain: MESQGVPPGPYRATKLWNEVTTSFRAGMPLRKHRQHFKKYGNCFTAGEAVDWLYDLLRNNSNFGPEVTRQQTIQLLRKFLKNHVIEDIKGRWGSENVDDNNQLFRFPATSPLKTLPRRYPELRKNNIENFSKDKDSIFKLRNLSRRTPKRHGLHLSQENGEKIKHEIINEDQENAIDNRELSQEDVEEVWRYVILIYLQTILGVPSLEEVINPKQVIPQYIMYNMANTSKRGVVILQNKSDDLPHWVLSAMKCLANWPRSNDMNNPTYVGFERDVFRTIADYFLDLPEPLLTFEYYELFVNILVVCGYITVSDRSSGIHKIQDDPQSSKFLHLNNLNSFKSTECLLLSLLHREKNKEESDSTERLQISNPGFQERCAKKMQLVNLRNRRVSANDIMGGSCHNLIGLSNMHDLSSNSKPRCCSLEGIVDVPGNSSKEASSVFHQSFPNIEGQNNKLFLESKPKQEFLLNLHSEENIQKPFSAGFKRTSTLTVQDQEELCNGKCKSKQLCRSQSLLLRSSTRRNSYINTPVAEIIMKPNVGQGSTSVQTAMESELGESSATINKRLCKSTIELSENSLLPASSMLTGTQSLLQPHLERVAIDALQLCCLLLPPPNRRKLQLLMRMISRMSQNVDMPKLHDAMGTRSLMIHTFSRCVLCCAEEVDLDELLAGRLVSFLMDHHQEILQVPSYLQTAVEKHLDYLKKGHIENPGDGLFAPLPTYSYCKQISAQEFDEQKVSTSQAAIAELLENIIKNRSLPLKEKRKKLKQFQKEYPLIYQKRFPTTESEAALFGDKPTIKQPMLILRKPKFRSLR.

Positions 24-108 constitute a DEP domain; the sequence is FRAGMPLRKH…DNNQLFRFPA (85 aa). A Rho-GAP domain is found at 281 to 321; the sequence is DYFLDLPEPLLTFEYYELFVNILVVCGYITVSDRSSGIHKI. S512 bears the Phosphoserine mark. The interval 598 to 653 is interaction with ZNF224; sequence AIDALQLCCLLLPPPNRRKLQLLMRMISRMSQNVDMPKLHDAMGTRSLMIHTFSRC.

As to quaternary structure, isoform 2 and isoform 5 can form homodimers and heterodimers. Interacts with ZNF224. As to expression, expressed in testis. Up-regulated in bladder cancer cells (at protein level).

Its subcellular location is the nucleus. Functionally, may be involved in transcriptional regulation as a transcriptional corepressor. The DEPDC1A-ZNF224 complex may play a critical role in bladder carcinogenesis by repressing the transcription of the A20 gene, leading to transport of NF-KB protein into the nucleus, resulting in suppression of apoptosis of bladder cancer cells. The chain is DEP domain-containing protein 1A (DEPDC1) from Homo sapiens (Human).